Reading from the N-terminus, the 556-residue chain is 2-isopropylmalate synthase (556 aa).

Positions 33 to 307 (PIWCSSDLRD…NPELDFSDID (275 aa)) constitute a Pyruvate carboxyltransferase domain. 4 residues coordinate Mg(2+): Asp-42, His-246, His-248, and Asn-282. The interval 439 to 556 (ANTPYALISH…SLSQAQAKAA (118 aa)) is regulatory domain.

Belongs to the alpha-IPM synthase/homocitrate synthase family. LeuA type 2 subfamily. Homodimer. Mg(2+) serves as cofactor.

It is found in the cytoplasm. It catalyses the reaction 3-methyl-2-oxobutanoate + acetyl-CoA + H2O = (2S)-2-isopropylmalate + CoA + H(+). It functions in the pathway amino-acid biosynthesis; L-leucine biosynthesis; L-leucine from 3-methyl-2-oxobutanoate: step 1/4. Functionally, catalyzes the condensation of the acetyl group of acetyl-CoA with 3-methyl-2-oxobutanoate (2-ketoisovalerate) to form 3-carboxy-3-hydroxy-4-methylpentanoate (2-isopropylmalate). This chain is 2-isopropylmalate synthase, found in Pseudomonas syringae pv. tomato (strain ATCC BAA-871 / DC3000).